The primary structure comprises 864 residues: Leucine--tRNA ligase (864 aa).

The short motif at Pro42–His52 is the 'HIGH' region element. A 'KMSKS' region motif is present at residues Lys624–Ser628. Lys627 lines the ATP pocket.

Belongs to the class-I aminoacyl-tRNA synthetase family.

It localises to the cytoplasm. It catalyses the reaction tRNA(Leu) + L-leucine + ATP = L-leucyl-tRNA(Leu) + AMP + diphosphate. The sequence is that of Leucine--tRNA ligase from Burkholderia vietnamiensis (strain G4 / LMG 22486) (Burkholderia cepacia (strain R1808)).